A 653-amino-acid polypeptide reads, in one-letter code: Choline transporter-like protein 3 (653 aa).

Residues 34–54 (WLFLFFLFWTGLVFIMGYSVV) traverse the membrane as a helical segment. Asn136 and Asn151 each carry an N-linked (GlcNAc...) asparagine glycan. Transmembrane regions (helical) follow at residues 213–233 (DTILGLCILALALSLAMMFTF), 243–263 (IFISLVILGLLFVCGVLWWLY), 284–304 (VLGFAIVSTGITAVLLVLIFV), 334–354 (LWTFAILIFFWVLWVAVLLSL), and 384–404 (LIGLIWTSEFILACQQMTIAG). Residues Asn412, Asn503, and Asn521 are each glycosylated (N-linked (GlcNAc...) asparagine). The next 2 helical transmembrane spans lie at 534–554 (FIIFLGKVLVVCFTVFGGLMA) and 563–583 (VWAVPLLLVAFFAYLVAHSFL). The segment at 632–653 (RAQQDKHSLRNEEGTELQAIVR) is disordered. Over residues 634-644 (QQDKHSLRNEE) the composition is skewed to basic and acidic residues.

The protein belongs to the CTL (choline transporter-like) family.

The protein resides in the membrane. The chain is Choline transporter-like protein 3 (SLC44A3) from Homo sapiens (Human).